The primary structure comprises 240 residues: Probable transcriptional regulatory protein HP_0162 (240 aa).

The protein belongs to the TACO1 family.

Its subcellular location is the cytoplasm. The protein is Probable transcriptional regulatory protein HP_0162 of Helicobacter pylori (strain ATCC 700392 / 26695) (Campylobacter pylori).